A 350-amino-acid polypeptide reads, in one-letter code: Phenylalanine--tRNA ligase alpha subunit (350 aa).

Glu257 is a Mg(2+) binding site.

Belongs to the class-II aminoacyl-tRNA synthetase family. Phe-tRNA synthetase alpha subunit type 1 subfamily. As to quaternary structure, tetramer of two alpha and two beta subunits. It depends on Mg(2+) as a cofactor.

The protein localises to the cytoplasm. The catalysed reaction is tRNA(Phe) + L-phenylalanine + ATP = L-phenylalanyl-tRNA(Phe) + AMP + diphosphate + H(+). The polypeptide is Phenylalanine--tRNA ligase alpha subunit (Listeria monocytogenes serovar 1/2a (strain ATCC BAA-679 / EGD-e)).